The sequence spans 616 residues: Adenylosuccinate synthetase 1 (616 aa).

Residues 1-27 (MDKQAERGQSAGPVKTPQGTQPPAHNY) form a disordered region. Residues 17–27 (PQGTQPPAHNY) are compositionally biased toward polar residues. Residues 87 to 93 (GDEGKGK) and 117 to 119 (GHT) contribute to the GTP site. Aspartate 88 acts as the Proton acceptor in catalysis. Mg(2+) contacts are provided by aspartate 88 and glycine 117. Residues 88 to 91 (DEGK), 115 to 118 (NAGH), threonine 202, lysine 216, glutamine 328, threonine 343, and lysine 472 contribute to the IMP site. Catalysis depends on histidine 118, which acts as the Proton donor. A substrate-binding site is contributed by 468–474 (AVTKKPR). Residues arginine 474 and 603–605 (GNG) each bind GTP.

This sequence belongs to the adenylosuccinate synthetase family. As to quaternary structure, homodimer. Requires Mg(2+) as cofactor.

It is found in the cytoplasm. The catalysed reaction is IMP + L-aspartate + GTP = N(6)-(1,2-dicarboxyethyl)-AMP + GDP + phosphate + 2 H(+). Its pathway is purine metabolism; AMP biosynthesis via de novo pathway; AMP from IMP: step 1/2. In terms of biological role, plays an important role in the salvage pathway for purine nucleotide biosynthesis. Catalyzes the first committed step in the biosynthesis of AMP from IMP. The polypeptide is Adenylosuccinate synthetase 1 (Trypanosoma cruzi (strain CL Brener)).